The sequence spans 621 residues: Chaperone protein HtpG (621 aa).

An a; substrate-binding region spans residues 1–328; it reads MTQEKKKFDA…SEDLPLNISR (328 aa). A b region spans residues 329–544; sequence ESLQHNNVLE…DTAMDIRMER (216 aa). Positions 545–621 are c; that stretch reads FLIEQKQIAS…LNDILQKAIL (77 aa).

Belongs to the heat shock protein 90 family. Homodimer.

The protein resides in the cytoplasm. In terms of biological role, molecular chaperone. Has ATPase activity. In Rickettsia typhi (strain ATCC VR-144 / Wilmington), this protein is Chaperone protein HtpG.